The chain runs to 590 residues: Protein Spindly (590 aa).

Residues 1–401 (MSDLEDEIKV…SMARMKALSE (401 aa)) are a coiled coil. Positions 446–590 (NKAQVQKRRR…KTMANECAQQ (145 aa)) are disordered. 2 stretches are compositionally biased toward basic and acidic residues: residues 483 to 497 (SNEK…HPVE) and 518 to 527 (RESKSVRICE). Composition is skewed to polar residues over residues 541–554 (VNDS…QTHQ) and 572–590 (QQPT…CAQQ).

Belongs to the Spindly family.

The protein localises to the chromosome. Its subcellular location is the centromere. It is found in the kinetochore. Required for the localization of dynein and dynactin to the mitotic kintochore. Dynein is believed to control the initial lateral interaction between the kinetochore and spindle microtubules and to facilitate the subsequent formation of end-on kinetochore-microtubule attachments mediated by the NDC80 complex. May act as an adapter protein linking the dynein motor complex to various cargos. The sequence is that of Protein Spindly (spdl1) from Danio rerio (Zebrafish).